The primary structure comprises 62 residues: Short neurotoxin 2 (62 aa).

Residues 1 to 20 are disordered; sequence MTCYNQQSSEAKTTTTCSGG. 4 cysteine pairs are disulfide-bonded: Cys-3/Cys-24, Cys-17/Cys-41, Cys-43/Cys-54, and Cys-55/Cys-60.

This sequence belongs to the three-finger toxin family. Short-chain subfamily. Type I alpha-neurotoxin sub-subfamily. Expressed by the venom gland.

It localises to the secreted. Functionally, binds to muscle nicotinic acetylcholine receptor (nAChR) and inhibit acetylcholine from binding to the receptor, thereby impairing neuromuscular transmission. The sequence is that of Short neurotoxin 2 from Oxyuranus scutellatus scutellatus (Australian taipan).